The following is a 936-amino-acid chain: F-box protein dre-1 (936 aa).

The segment at 1–67 is disordered; that stretch reads MSSSSSPFFH…GSSEADNPTL (67 aa). Positions 22–36 are enriched in low complexity; that stretch reads QQSPSYSQNSNSPSQ. A compositionally biased stretch (polar residues) spans 48–63; it reads GSTSMRYSPSGSSEAD. The F-box domain occupies 159-205; the sequence is QDHINRLPEELLLKVFSFLPDKSLLACSSVSYRFNQISNSHEVWKEL. PbH1 repeat units follow at residues 405–427, 428–450, 451–473, 474–496, 497–519, 520–542, 543–565, 566–588, 589–611, 612–634, 635–657, 658–680, 681–703, 704–726, 727–749, 750–772, 773–795, and 796–818; these read SAAP…YITD, NATG…WVKN, HANP…FTFE, HGQG…EVKN, SANP…YVHE, RGRG…WITS, HSDP…YIFG, EGRG…QIRS, QSDP…YVHE, KGRG…WVTT, GSSP…YFYD, QGHG…QIRT, GSNP…LVYN, GGKG…WIKT, DSEP…CIFN, RGKG…LIST, ESNP…EITN, and GATA…CVAT. Residues 843-914 form a UBR-type zinc finger; it reads GLCLFKVSSN…LERHCHLQNV (72 aa).

As to quaternary structure, component of a SCF ubiquitin ligase complex. Interacts (via F-box) with skr-1. Interacts with blmp-1; the interaction targets blmp-1 for proteasomal degradation. Interacts with ced-9; the interaction inhibits ced-9 activity, either directly or indirectly. As to expression, in mid-embryogenesis, expression is most prominent in epidermal and intestinal cells. By the 1.5-fold stage of embryogenesis, expression is additionally detected in neurons and other cells. During larval and adult stages, highest expression is seen in epidermal seam cells and hypodermis. In larvae, strongly expressed in the P epidermal blast cells and descendents that give rise to the vulva and weakly expressed in the somatic gonad, including the gonadoblasts, the anchor cell and the distal tip cells. Some weak expression also seen in adult spermatheca and uterus. In the musculature, expressed in the pharynx, anal depressor, sex muscles, and body wall muscles. Detected in neurons of the head, tail, ventral cord and periphery. Also expressed in the embryonic tail spike cell.

The protein localises to the nucleus. The protein resides in the cytoplasm. The protein operates within protein modification; protein ubiquitination. Functionally, substrate recognition component of a SCF (SKP1-CUL1-F-box protein) E3 ubiquitin-protein ligase complex which mediates the ubiquitination and subsequent proteasomal degradation of target proteins including blmp-1. Promotes ubiquitination of snail family proteins ces-1, scrt-1 and snai-1. Heterochronic protein which is required for the timing of gonad development and epidermal seam cell differentiation. Regulates tail-spike cell death through inhibition of the apoptosis regulator ced-9. This is F-box protein dre-1 from Caenorhabditis elegans.